The primary structure comprises 245 residues: Lactate utilization protein A (245 aa).

It belongs to the LutA/YkgE family.

Is involved in L-lactate degradation and allows cells to grow with lactate as the sole carbon source. This is Lactate utilization protein A from Exiguobacterium sp. (strain ATCC BAA-1283 / AT1b).